We begin with the raw amino-acid sequence, 352 residues long: MVVDDSAVVRQVLVGVLNDAPGIDVIATAADPLLAIEKMRQHWPDVIVLDVEMPRMDGITFLRKIMSERPTPVVICSTLTEKGARVTMDALAAGAVAVVTKPRLGLKQFLTDSADELVATVRSAARANVKRLAARVTAAPLEAEVKHTADVILPAQSGRALAQTTERIVAIGTSTGGTQALEEVLTALPRVCPGIVIVQHMPEKFTAAFAARLNGLCQIAVKEAANNDRVMPGRALIAPGGKHLLLRRSGAQYFVEVLEGPPVNRHRPSVDVLFRSAARAAGSNALGIIMTGMGDDGAAGLLEMRQAGARTVAQDEHTSIVFGMPKEAIKRGGADRILPLGAMAREIVTQLQ.

In terms of domain architecture, Response regulatory spans 1–116 (MVVDDSAVVR…KQFLTDSADE (116 aa)). Position 50 is a 4-aspartylphosphate (Asp-50). Residues 162 to 352 (AQTTERIVAI…MAREIVTQLQ (191 aa)) form the CheB-type methylesterase domain. Active-site residues include Ser-174, His-200, and Asp-296.

This sequence belongs to the CheB family. In terms of processing, phosphorylated by CheA. Phosphorylation of the N-terminal regulatory domain activates the methylesterase activity.

The protein localises to the cytoplasm. It carries out the reaction [protein]-L-glutamate 5-O-methyl ester + H2O = L-glutamyl-[protein] + methanol + H(+). It catalyses the reaction L-glutaminyl-[protein] + H2O = L-glutamyl-[protein] + NH4(+). Involved in chemotaxis. Part of a chemotaxis signal transduction system that modulates chemotaxis in response to various stimuli. Catalyzes the demethylation of specific methylglutamate residues introduced into the chemoreceptors (methyl-accepting chemotaxis proteins or MCP) by CheR. Also mediates the irreversible deamidation of specific glutamine residues to glutamic acid. The polypeptide is Protein-glutamate methylesterase/protein-glutamine glutaminase 2 (Xanthomonas axonopodis pv. citri (strain 306)).